The sequence spans 546 residues: Alpha-isocomene synthase (546 aa).

Mg(2+) contacts are provided by Asp299, Asp303, Asp443, and Glu451. The DDXXD motif signature appears at Asp299 to Asp303.

Belongs to the terpene synthase family. Tpsa subfamily. Mg(2+) is required as a cofactor. It depends on Mn(2+) as a cofactor. Highly expressed in roots, lower levels in stems and leaves and detected in disk florets, but not in ray florets.

It carries out the reaction (2E,6E)-farnesyl diphosphate = (-)-alpha-isocomene + diphosphate. It participates in secondary metabolite biosynthesis; terpenoid biosynthesis. Functionally, sesquiterpene synthase involved in the biosynthesis of alpha-isocomene as the major product and detectable amounts of beta-caryophyllene, beta-isocomene, silphinene and modeph-2-ene. Produces exclusively the (-)-(E)-beta caryophyllene enantiomer. In Matricaria chamomilla var. recutita (German chamomile), this protein is Alpha-isocomene synthase.